The chain runs to 333 residues: MKGKLLKGVLSLGVGLGALYSGTSAQAEASTNQNDTLKVMTHNVYMLSTNLYPNWGQTERADLFGAADYIKNQDVVILNEVFDNSASDRLLGNLKKEYPNQTAVLGRSSGSEWDKTLGNYSSSTPEDGGVAIVSKWPIAEKIQYVFAKGCGPDNLSNKGFVYTKIKKNDRFVHVIGTHLQAEDSMCGKTSPASVRTNQLKEIQDFIKNKNIPNNEYVLIGGDMNVNKINAENNNDSEYASMFKTLNASVPSYTGHTATWDATTNSIAKYNFPDSLAEYLDYIIASKDHANPSYIENKVLQPKSPQWTVTSWFKNIRIMITLIIIQVEATISMK.

Positions 1-26 are cleaved as a signal peptide; that stretch reads MKGKLLKGVLSLGVGLGALYSGTSAQ. Cys-150 and Cys-186 are joined by a disulfide.

This sequence belongs to the neutral sphingomyelinase family. Requires Mg(2+) as cofactor. Post-translationally, the N-terminus is blocked.

Its subcellular location is the secreted. The enzyme catalyses a sphingomyelin + H2O = phosphocholine + an N-acylsphing-4-enine + H(+). Activated by cobalt and manganese ions. Its function is as follows. Required, with sphingomyelinase, to effect target cell lysis (hemolysis). The protein is Sphingomyelinase C (cerB) of Bacillus cereus.